Here is a 538-residue protein sequence, read N- to C-terminus: CWF19-like protein 1 (538 aa).

Residues 298–324 form a disordered region; the sequence is QGRKRSSTGRDSKSSPHPKQPRKPPQP.

This sequence belongs to the CWF19 family. As to expression, expressed in many brain regions, including cerebellum, thalamus and occipital, parietal and temporal lobes (at protein level). Also expressed in the spinal cord (at protein level).

The polypeptide is CWF19-like protein 1 (CWF19L1) (Homo sapiens (Human)).